Here is a 552-residue protein sequence, read N- to C-terminus: Membrane protein insertase YidC (552 aa).

5 consecutive transmembrane segments (helical) span residues valine 7–glutamine 24, tryptophan 364–alanine 384, leucine 434–valine 454, proline 473–proline 493, and proline 508–valine 528.

Belongs to the OXA1/ALB3/YidC family. Type 1 subfamily. In terms of assembly, interacts with the Sec translocase complex via SecD. Specifically interacts with transmembrane segments of nascent integral membrane proteins during membrane integration.

The protein resides in the cell inner membrane. Its function is as follows. Required for the insertion and/or proper folding and/or complex formation of integral membrane proteins into the membrane. Involved in integration of membrane proteins that insert both dependently and independently of the Sec translocase complex, as well as at least some lipoproteins. Aids folding of multispanning membrane proteins. This is Membrane protein insertase YidC from Burkholderia cenocepacia (strain HI2424).